The chain runs to 487 residues: Putative sugar kinase YoaC (487 aa).

The protein belongs to the FGGY kinase family.

The polypeptide is Putative sugar kinase YoaC (yoaC) (Bacillus subtilis (strain 168)).